A 940-amino-acid polypeptide reads, in one-letter code: Gamma-aminobutyric acid type B receptor subunit 2 (940 aa).

A signal peptide spans 1-40 (MASPPSSGQPRPPPPPPPPARLLLPLLLSLLLWLAPGAWG). Topologically, residues 41-482 (WTRGAPRPPP…LRKISLPLYS (442 aa)) are extracellular. N-linked (GlcNAc...) asparagine glycosylation is present at Asn89. Cystine bridges form between Cys107–Cys134, Cys236–Cys265, and Cys264–Cys301. Residues Asn297, Asn388, Asn403, and Asn452 are each glycosylated (N-linked (GlcNAc...) asparagine). Residues 483-503 (ILSALTILGMIMASAFLFFNI) traverse the membrane as a helical segment. Residues 504–521 (KNRNQKLIKMSSPYMNNL) are Cytoplasmic-facing. Residues 522–542 (IILGGMLSYASIFLFGLDGSF) traverse the membrane as a helical segment. The Extracellular segment spans residues 543-550 (VSEKTFET). A helical membrane pass occupies residues 551–571 (LCTVRTWILTVGYTTAFGAMF). The Cytoplasmic portion of the chain corresponds to 572 to 596 (AKTWRVHAIFKNVKMKKKIIKDQKL). A helical transmembrane segment spans residues 597 to 617 (LVIVGGMLLIDLCILICWQAV). At 618–653 (DPLRRTVERYSMEPDPAGRDISIRPLLEHCENTHMT) the chain is on the extracellular side. The helical transmembrane segment at 654–674 (IWLGIVYAYKGLLMLFGCFLA) threads the bilayer. Residues 675 to 690 (WETRNVSIPALNDSKY) are Cytoplasmic-facing. A helical transmembrane segment spans residues 691–711 (IGMSVYNVGIMCIIGAAVSFL). The Extracellular segment spans residues 712 to 719 (TRDQPNVQ). The helical transmembrane segment at 720 to 740 (FCIVALVIIFCSTITLCLVFV) threads the bilayer. The Cytoplasmic portion of the chain corresponds to 741–940 (PKLITLRTNP…PSFRVMVSGL (200 aa)). The segment at 762-789 (TQNQKKEDSKTSTSVTSVNQASTSRLEG) is disordered. Polar residues predominate over residues 772-786 (TSTSVTSVNQASTSR). Residues Ser775 and Ser778 each carry the phosphoserine modification. Positions 780–818 (NQASTSRLEGLQSENHRLRMKITELDKDLEEVTMQLQDT) form a coiled coil. Thr818 carries the phosphothreonine modification. Phosphoserine is present on residues Ser883, Ser892, Ser912, Ser915, Ser919, and Ser923.

This sequence belongs to the G-protein coupled receptor 3 family. GABA-B receptor subfamily. Heterodimer of GABBR1 and GABBR2. Homodimers may form, but are inactive. Interacts (via C-terminus) with ATF4 (via leucine zipper domain). Interacts with KCTD8, KCTD12 and KCTD16; this interaction determines the pharmacology and kinetics of the receptor response, the KCTD proteins markedly accelerating the GABA-B response, although to different extents. As to expression, highly expressed in areas of the brain including thalamic nuclei, the hippocampus, cerebellar Purkinje cells and the medial habenula, and moderately expressed in the cerebral cortex, certain anterioventral thalamic nuclei, dorsal medial hypothalamic nucleus and suprachiasmatic nuclei. Also weakly expressed in the testis.

The protein localises to the cell membrane. It localises to the postsynaptic cell membrane. The protein resides in the perikaryon. Its subcellular location is the cell projection. It is found in the dendrite. Its function is as follows. Component of a heterodimeric G-protein coupled receptor for GABA, formed by GABBR1 and GABBR2. Within the heterodimeric GABA receptor, only GABBR1 seems to bind agonists, while GABBR2 mediates coupling to G proteins. Ligand binding causes a conformation change that triggers signaling via guanine nucleotide-binding proteins (G proteins) and modulates the activity of down-stream effectors, such as adenylate cyclase. Signaling inhibits adenylate cyclase, stimulates phospholipase A2, activates potassium channels, inactivates voltage-dependent calcium-channels and modulates inositol phospholipid hydrolysis. Plays a critical role in the fine-tuning of inhibitory synaptic transmission. Pre-synaptic GABA receptor inhibits neurotransmitter release by down-regulating high-voltage activated calcium channels, whereas postsynaptic GABA receptor decreases neuronal excitability by activating a prominent inwardly rectifying potassium (Kir) conductance that underlies the late inhibitory postsynaptic potentials. Not only implicated in synaptic inhibition but also in hippocampal long-term potentiation, slow wave sleep, muscle relaxation and antinociception. The sequence is that of Gamma-aminobutyric acid type B receptor subunit 2 (Gabbr2) from Rattus norvegicus (Rat).